Consider the following 2522-residue polypeptide: Unconventional myosin-IXAa (2522 aa).

In terms of domain architecture, Ras-associating spans 15-113; sequence SELTLRIYPG…YRFLLREKNL (99 aa). The region spanning 147-1007 is the Myosin motor domain; it reads KDFDDLCNLP…ERQRLQDLLH (861 aa). The chain crosses the membrane as a helical span at residues 176 to 196; sequence IYTYVGSILIVINPFKFLPIY. 240–247 contributes to the ATP binding site; the sequence is GESGSGKT. The tract at residues 767–802 is disordered; sequence VNRRNPRTPLSDLQGSNAINQREGWNGRPGRQNRLS. The segment covering 777–786 has biased composition (polar residues); sequence SDLQGSNAIN. The interval 888–910 is actin-binding; the sequence is LNKLMETLGQSQPYFVKCIRSNS. IQ domains follow at residues 1012-1039, 1063-1092, 1102-1131, and 1125-1154; these read SRIV…AACQ, QEGA…ASVL, QRRA…ATIR, and QRDA…QRLK. Positions 1012–1149 are neck or regulatory domain; the sequence is SRIVYLQRRF…LARQRFRELQ (138 aa). The tract at residues 1150–2497 is tail; it reads KQRLKITHLP…LQGAKSSPQR (1348 aa). Disordered regions lie at residues 1218–1254, 1318–1409, 1424–1612, 1630–1754, 1799–1827, and 1962–1983; these read GMAP…RRMR, DKAP…STRR, NEAD…GNIF, NQEK…GRVR, RLSP…VKRR, and LDSS…KDTD. Over residues 1229-1242 the composition is skewed to basic and acidic residues; that stretch reads TIRERPRTLEDPNQ. 2 stretches are compositionally biased toward polar residues: residues 1330 to 1349 and 1366 to 1390; these read SPSS…STPD and SLPT…NSVT. 2 stretches are compositionally biased toward basic and acidic residues: residues 1399 to 1408 and 1426 to 1435; these read PSKDKKESTR and ADVKPLEVKD. Residues 1437–1454 are compositionally biased toward polar residues; it reads AAQTSEPPSPAQPSTDSS. The stretch at 1456–1525 forms a coiled coil; that stretch reads VLEKLEKLNE…LRRIEQSRQE (70 aa). 4 stretches are compositionally biased toward basic and acidic residues: residues 1458-1484, 1492-1523, 1549-1566, and 1580-1589; these read EKLE…EMME, ILEE…EQSR, PARE…RPKD, and LESRGDEARS. Polar residues-rich tracts occupy residues 1594–1604 and 1631–1641; these read KPSNQNVNISM and QEKTPGAQNEV. Residues 1656-1665 are compositionally biased toward basic residues; sequence PGHKKARMAR. Over residues 1681–1690 the composition is skewed to acidic residues; it reads GESEEEEYDE. 2 stretches are compositionally biased toward basic and acidic residues: residues 1738-1753 and 1810-1822; these read LGKH…DGRV and LQRE…EPSP. Residues 1990–2039 form a Phorbol-ester/DAG-type zinc finger; the sequence is GHIFKSTQYSIPTYCEYCSSLIWMMDKACVCKLCRYACHRKCCQKMTTKC. The region spanning 2054-2242 is the Rho-GAP domain; it reads VELSRLTNDE…LIICEQMNKY (189 aa). Disordered stretches follow at residues 2274–2325 and 2348–2522; these read PVHR…QEEK and LEPR…EFMV. Residues 2317 to 2344 are a coiled coil; that stretch reads QVAMQQEEKVLTEQIESLQKEKEELTFE. Residues 2366–2383 show a composition bias toward polar residues; sequence TADSSENLNVDSEGATSD. The segment covering 2413-2429 has biased composition (low complexity); the sequence is SLDSIDSCSTVSSVSSS. Over residues 2436 to 2448 the composition is skewed to basic residues; the sequence is RTHKLSLRSKSPS. Residues 2497–2506 show a composition bias toward basic and acidic residues; sequence RHREQKKDPE.

The protein belongs to the TRAFAC class myosin-kinesin ATPase superfamily. Myosin family.

Its subcellular location is the membrane. It is found in the cytoplasm. The protein resides in the synapse. The protein localises to the cell projection. It localises to the growth cone. Myosins are actin-based motor molecules with ATPase activity. Unconventional myosins serve in intracellular movements. Regulates Rho by stimulating it's GTPase activity in neurons. Required for the regulation of neurite branching and motor neuron axon guidance. The polypeptide is Unconventional myosin-IXAa (myo9aa) (Danio rerio (Zebrafish)).